Here is a 205-residue protein sequence, read N- to C-terminus: COP9 signalosome complex subunit 7 (205 aa).

The 135-residue stretch at 1–135 folds into the PCI domain; that stretch reads MEEKISQAID…QTLHVSWALE (135 aa). A Phosphoserine modification is found at Ser-183.

Belongs to the CSN7/EIF3M family. CSN7 subfamily. As to quaternary structure, component of the COP9 signalosome (CSN) complex.

In terms of biological role, component of the COP9 signalosome (CSN) complex that acts as an regulator of the ubiquitin (Ubl) conjugation pathway by mediating the deneddylation of the cullin subunit of SCF-type E3 ubiquitin-protein ligase complexes. The chain is COP9 signalosome complex subunit 7 (csn71) from Schizosaccharomyces pombe (strain 972 / ATCC 24843) (Fission yeast).